A 279-amino-acid chain; its full sequence is NH(3)-dependent NAD(+) synthetase (279 aa).

Gly46–Ser53 is an ATP binding site. Asp52 provides a ligand contact to Mg(2+). Deamido-NAD(+) is bound at residue Arg139. Thr159 is a binding site for ATP. Position 164 (Glu164) interacts with Mg(2+). Residues Lys172 and Asp179 each coordinate deamido-NAD(+). 2 residues coordinate ATP: Lys188 and Thr210. A deamido-NAD(+)-binding site is contributed by His259–Lys260.

Belongs to the NAD synthetase family. As to quaternary structure, homodimer.

The enzyme catalyses deamido-NAD(+) + NH4(+) + ATP = AMP + diphosphate + NAD(+) + H(+). It functions in the pathway cofactor biosynthesis; NAD(+) biosynthesis; NAD(+) from deamido-NAD(+) (ammonia route): step 1/1. Its function is as follows. Catalyzes the ATP-dependent amidation of deamido-NAD to form NAD. Uses ammonia as a nitrogen source. The protein is NH(3)-dependent NAD(+) synthetase of Leifsonia xyli subsp. xyli (strain CTCB07).